A 231-amino-acid chain; its full sequence is 7-cyano-7-deazaguanine synthase (231 aa).

8–18 (FSGGQDSTTCL) lines the ATP pocket. Zn(2+) is bound by residues Cys188, Cys197, Cys200, and Cys203.

The protein belongs to the QueC family. Zn(2+) serves as cofactor.

It carries out the reaction 7-carboxy-7-deazaguanine + NH4(+) + ATP = 7-cyano-7-deazaguanine + ADP + phosphate + H2O + H(+). The protein operates within purine metabolism; 7-cyano-7-deazaguanine biosynthesis. In terms of biological role, catalyzes the ATP-dependent conversion of 7-carboxy-7-deazaguanine (CDG) to 7-cyano-7-deazaguanine (preQ(0)). This Escherichia fergusonii (strain ATCC 35469 / DSM 13698 / CCUG 18766 / IAM 14443 / JCM 21226 / LMG 7866 / NBRC 102419 / NCTC 12128 / CDC 0568-73) protein is 7-cyano-7-deazaguanine synthase.